A 387-amino-acid chain; its full sequence is Succinate--CoA ligase [ADP-forming] subunit beta (387 aa).

ATP-binding positions include lysine 46, 53 to 55 (GRG), glutamate 99, cysteine 102, and glutamate 107. Asparagine 196 and aspartate 210 together coordinate Mg(2+). Substrate contacts are provided by residues asparagine 261 and 318–320 (GIV).

The protein belongs to the succinate/malate CoA ligase beta subunit family. Heterotetramer of two alpha and two beta subunits. Requires Mg(2+) as cofactor.

The catalysed reaction is succinate + ATP + CoA = succinyl-CoA + ADP + phosphate. It catalyses the reaction GTP + succinate + CoA = succinyl-CoA + GDP + phosphate. It functions in the pathway carbohydrate metabolism; tricarboxylic acid cycle; succinate from succinyl-CoA (ligase route): step 1/1. Functionally, succinyl-CoA synthetase functions in the citric acid cycle (TCA), coupling the hydrolysis of succinyl-CoA to the synthesis of either ATP or GTP and thus represents the only step of substrate-level phosphorylation in the TCA. The beta subunit provides nucleotide specificity of the enzyme and binds the substrate succinate, while the binding sites for coenzyme A and phosphate are found in the alpha subunit. This chain is Succinate--CoA ligase [ADP-forming] subunit beta, found in Campylobacter hominis (strain ATCC BAA-381 / DSM 21671 / CCUG 45161 / LMG 19568 / NCTC 13146 / CH001A).